The sequence spans 106 residues: Ribonuclease P protein component 4 (106 aa).

Zn(2+) is bound by residues Cys-63, Cys-66, Cys-89, and Cys-92.

It belongs to the eukaryotic/archaeal RNase P protein component 4 family. As to quaternary structure, consists of a catalytic RNA component and at least 4-5 protein subunits. Zn(2+) is required as a cofactor.

It localises to the cytoplasm. It catalyses the reaction Endonucleolytic cleavage of RNA, removing 5'-extranucleotides from tRNA precursor.. Functionally, part of ribonuclease P, a protein complex that generates mature tRNA molecules by cleaving their 5'-ends. The polypeptide is Ribonuclease P protein component 4 (Methanosphaerula palustris (strain ATCC BAA-1556 / DSM 19958 / E1-9c)).